We begin with the raw amino-acid sequence, 220 residues long: MDLAAHIDHTLLKPTATPEEVAKAAEEALEYGFYGLCIPPSYVAWVKARYPHAPFRLVTVVGFPLGYQEKEVKALEAALACARGADEVDMVLHLGRAKAGDLDYVEAEVRAVREAVPKAVLKVILETGYFSPEEIARLAEAAIRGGADFLKTSTGFGPRGASLEDVALLVRVAQGRAQVKAAGGIRDRETALRMLKAGASRLGTSSGVALVAGEGGTLGY.

Aspartate 89 functions as the Proton donor/acceptor in the catalytic mechanism. Lysine 151 serves as the catalytic Schiff-base intermediate with acetaldehyde. Residue lysine 180 is the Proton donor/acceptor of the active site.

This sequence belongs to the DeoC/FbaB aldolase family. DeoC type 1 subfamily.

The protein localises to the cytoplasm. The catalysed reaction is 2-deoxy-D-ribose 5-phosphate = D-glyceraldehyde 3-phosphate + acetaldehyde. Its pathway is carbohydrate degradation; 2-deoxy-D-ribose 1-phosphate degradation; D-glyceraldehyde 3-phosphate and acetaldehyde from 2-deoxy-alpha-D-ribose 1-phosphate: step 2/2. Its function is as follows. Catalyzes a reversible aldol reaction between acetaldehyde and D-glyceraldehyde 3-phosphate to generate 2-deoxy-D-ribose 5-phosphate. This Thermus thermophilus (strain ATCC BAA-163 / DSM 7039 / HB27) protein is Deoxyribose-phosphate aldolase.